Consider the following 448-residue polypeptide: Ribosomal protein uS12 methylthiotransferase RimO (448 aa).

In terms of domain architecture, MTTase N-terminal spans 16–126 (PKISFVSLGC…VVAAVHEAVP (111 aa)). Residues C25, C61, C90, C157, C161, and C164 each coordinate [4Fe-4S] cluster. The Radical SAM core domain occupies 143–380 (LTPRHYAYLK…METQNGIALR (238 aa)). The region spanning 383 to 448 (RAKVGKRLPV…EAYDLYGSVA (66 aa)) is the TRAM domain.

This sequence belongs to the methylthiotransferase family. RimO subfamily. It depends on [4Fe-4S] cluster as a cofactor.

Its subcellular location is the cytoplasm. The enzyme catalyses L-aspartate(89)-[ribosomal protein uS12]-hydrogen + (sulfur carrier)-SH + AH2 + 2 S-adenosyl-L-methionine = 3-methylsulfanyl-L-aspartate(89)-[ribosomal protein uS12]-hydrogen + (sulfur carrier)-H + 5'-deoxyadenosine + L-methionine + A + S-adenosyl-L-homocysteine + 2 H(+). Its function is as follows. Catalyzes the methylthiolation of an aspartic acid residue of ribosomal protein uS12. The polypeptide is Ribosomal protein uS12 methylthiotransferase RimO (Methylobacterium radiotolerans (strain ATCC 27329 / DSM 1819 / JCM 2831 / NBRC 15690 / NCIMB 10815 / 0-1)).